The sequence spans 329 residues: GTPase Obg (329 aa).

The 159-residue stretch at 1-159 folds into the Obg domain; the sequence is MQFIDQACIS…WLLHLELKLL (159 aa). The 169-residue stretch at 160–328 folds into the OBG-type G domain; the sequence is AEVGIIGLPN…LLKNVWEKLE (169 aa). ATP contacts are provided by residues 166–173, 191–195, 213–216, 280–283, and 309–311; these read GLPNAGKS, FTTLI, DIPG, NKKE, and SAA. Residues Ser-173 and Thr-193 each coordinate Mg(2+).

It belongs to the TRAFAC class OBG-HflX-like GTPase superfamily. OBG GTPase family. In terms of assembly, monomer. Requires Mg(2+) as cofactor.

Its subcellular location is the cytoplasm. Functionally, an essential GTPase which binds GTP, GDP and possibly (p)ppGpp with moderate affinity, with high nucleotide exchange rates and a fairly low GTP hydrolysis rate. Plays a role in control of the cell cycle, stress response, ribosome biogenesis and in those bacteria that undergo differentiation, in morphogenesis control. In Prochlorococcus marinus (strain MIT 9211), this protein is GTPase Obg.